The following is a 375-amino-acid chain: DNA replication and repair protein RecF (375 aa).

30 to 37 (GDNAQGKT) contacts ATP.

Belongs to the RecF family.

It localises to the cytoplasm. Functionally, the RecF protein is involved in DNA metabolism; it is required for DNA replication and normal SOS inducibility. RecF binds preferentially to single-stranded, linear DNA. It also seems to bind ATP. This chain is DNA replication and repair protein RecF, found in Symbiobacterium thermophilum (strain DSM 24528 / JCM 14929 / IAM 14863 / T).